Reading from the N-terminus, the 143-residue chain is Nitrosuccinic acid decarboxylase npaB (143 aa).

Belongs to the carboxymuconolactone decarboxylase family. Mg(2+) serves as cofactor.

The protein operates within mycotoxin biosynthesis. Functionally, nitrosuccinic acid decarboxylase; part of the gene cluster that mediates the biosynthesis of the deadly neurotoxic nitroalkane 3-nitropropanoic acid (3-NPA) that acts as an antimetabolite of succinate and irreversibly inhibits succinate dehydrogenase and disrupts mitochondrial oxidative phosphorylation. NpaB facilitates decarboxylation of nitrosuccinic acid produced by the nitrosuccinic acid synthase npaA to yield the final product of the cluster, the lethal mycotoxin 3-NPA. The polypeptide is Nitrosuccinic acid decarboxylase npaB (Metarhizium robertsii (strain ARSEF 23 / ATCC MYA-3075) (Metarhizium anisopliae (strain ARSEF 23))).